Here is an 86-residue protein sequence, read N- to C-terminus: Putative sodium channel toxin Ts17 (86 aa).

Positions 1 to 19 are cleaved as a signal peptide; that stretch reads MNYFIFLVVACLLTAGTEG. One can recognise an LCN-type CS-alpha/beta domain in the interval 21 to 82; that stretch reads KDGYPVEGDN…EPTKTSGRCK (62 aa). Intrachain disulfides connect C31-C81, C35-C57, C43-C64, and C47-C66. P83 carries the proline amide modification.

The protein belongs to the long (4 C-C) scorpion toxin superfamily. Sodium channel inhibitor family. Alpha subfamily. Expressed by the venom gland.

The protein localises to the secreted. Its function is as follows. Alpha toxins bind voltage-independently at site-3 of sodium channels (Nav) and inhibit the inactivation of the activated channels, thereby blocking neuronal transmission. The chain is Putative sodium channel toxin Ts17 from Tityus serrulatus (Brazilian scorpion).